Consider the following 184-residue polypeptide: Glutathione-regulated potassium-efflux system ancillary protein KefG (184 aa).

It belongs to the NAD(P)H dehydrogenase (quinone) family. KefG subfamily. In terms of assembly, interacts with KefB.

It localises to the cell inner membrane. The catalysed reaction is a quinone + NADH + H(+) = a quinol + NAD(+). The enzyme catalyses a quinone + NADPH + H(+) = a quinol + NADP(+). Regulatory subunit of a potassium efflux system that confers protection against electrophiles. Required for full activity of KefB. In Yersinia enterocolitica serotype O:8 / biotype 1B (strain NCTC 13174 / 8081), this protein is Glutathione-regulated potassium-efflux system ancillary protein KefG.